Here is a 539-residue protein sequence, read N- to C-terminus: Phosphatidylinositol 4-phosphate 5-kinase type-1 beta (539 aa).

The interval 1-21 (MSSTAENGDAVPGKQNEEKTY) is disordered. Positions 25–395 (ASSAIKGAIQ…RFLKFMNSRV (371 aa)) constitute a PIPK domain. Serine 445, serine 447, and serine 448 each carry phosphoserine.

As to quaternary structure, interacts with RAC1, AJUBA, PLD1, PLD2 and ARF1.

Its subcellular location is the cytoplasm. It is found in the cytosol. The protein resides in the cell membrane. It localises to the endomembrane system. The catalysed reaction is a 1,2-diacyl-sn-glycero-3-phospho-(1D-myo-inositol 4-phosphate) + ATP = a 1,2-diacyl-sn-glycero-3-phospho-(1D-myo-inositol-4,5-bisphosphate) + ADP + H(+). It carries out the reaction 1-octadecanoyl-2-(5Z,8Z,11Z,14Z)-eicosatetraenoyl-sn-glycero-3-phospho-1D-myo-inositol 4-phosphate + ATP = 1-octadecanoyl-2-(5Z,8Z,11Z,14Z)-eicosatetraenoyl-sn-glycero-3-phospho-1D-myo-inositol 4,5-bisphosphate + ADP + H(+). It catalyses the reaction 1-octadecanoyl-2-(9Z)-octadecenoyl-sn-glycero-3-phospho-1D-myo-inositol 4-phosphate + ATP = 1-octadecanoyl-2-(9Z)-octadecenoyl-sn-glycero-3-phospho-1D-myo-inositol 4,5-bisphosphate + ADP + H(+). The enzyme catalyses 1-octadecanoyl-2-(9Z)-octadecenoyl-sn-glycero-3-phospho-1D-myo-inositol + ATP = 1-octadecanoyl-2-(9Z)-octadecenoyl-sn-glycero-3-phospho-1D-myo-inositol 5-phosphate + ADP + H(+). The catalysed reaction is 1-octadecanoyl-2-(9Z,12Z)-octadecadienoyl-sn-glycero-3-phospho-1D-myo-inositol + ATP = 1-octadecanoyl-2-(9Z,12Z)-octadecadienoyl-sn-glycero-3-phospho-1D-myo-inositol 5-phosphate + ADP + H(+). It carries out the reaction 1-octadecanoyl-2-(5Z,8Z,11Z,14Z-eicosatetraenoyl)-sn-glycero-3-phospho-(1D-myo-inositol) + ATP = 1-octadecanoyl-2-(5Z,8Z,11Z,14Z)-eicosatetraenoyl-sn-glycero-3-phospho-1D-myo-inositol 5-phosphate + ADP + H(+). It catalyses the reaction 1,2-di-(9Z,12Z)-octadecadienoyl-sn-glycero-3-phospho-1D-myo-inositol + ATP = 1,2-di(9Z,12Z)-octadecadienoyl-sn-glycero-3-phospho-1D-myo-inositol 5-phosphate + ADP + H(+). Functionally, catalyzes the phosphorylation of phosphatidylinositol 4-phosphate (PtdIns(4)P/PI4P) to form phosphatidylinositol 4,5-bisphosphate (PtdIns(4,5)P2/PIP2), a lipid second messenger that regulates several cellular processes such as signal transduction, vesicle trafficking, actin cytoskeleton dynamics, cell adhesion, and cell motility. PtdIns(4,5)P2 can directly act as a second messenger or can be utilized as a precursor to generate other second messengers: inositol 1,4,5-trisphosphate (IP3), diacylglycerol (DAG) or phosphatidylinositol-3,4,5-trisphosphate (PtdIns(3,4,5)P3/PIP3). Mediates RAC1-dependent reorganization of actin filaments. Contributes to the activation of phospholipase PLD2. Together with PIP5K1A, is required, after stimulation by G-protein coupled receptors, for the synthesis of IP3 that will induce stable platelet adhesion. The sequence is that of Phosphatidylinositol 4-phosphate 5-kinase type-1 beta from Rattus norvegicus (Rat).